The chain runs to 231 residues: 5'-methylthioadenosine/S-adenosylhomocysteine nucleosidase (231 aa).

Glutamate 12 functions as the Proton acceptor in the catalytic mechanism. Substrate is bound by residues glycine 78, valine 153, and 174-175 (ME). Catalysis depends on aspartate 198, which acts as the Proton donor.

Belongs to the PNP/UDP phosphorylase family. MtnN subfamily.

It catalyses the reaction S-adenosyl-L-homocysteine + H2O = S-(5-deoxy-D-ribos-5-yl)-L-homocysteine + adenine. It carries out the reaction S-methyl-5'-thioadenosine + H2O = 5-(methylsulfanyl)-D-ribose + adenine. The catalysed reaction is 5'-deoxyadenosine + H2O = 5-deoxy-D-ribose + adenine. It participates in amino-acid biosynthesis; L-methionine biosynthesis via salvage pathway; S-methyl-5-thio-alpha-D-ribose 1-phosphate from S-methyl-5'-thioadenosine (hydrolase route): step 1/2. Its function is as follows. Catalyzes the irreversible cleavage of the glycosidic bond in both 5'-methylthioadenosine (MTA) and S-adenosylhomocysteine (SAH/AdoHcy) to adenine and the corresponding thioribose, 5'-methylthioribose and S-ribosylhomocysteine, respectively. Also cleaves 5'-deoxyadenosine, a toxic by-product of radical S-adenosylmethionine (SAM) enzymes, into 5-deoxyribose and adenine. The protein is 5'-methylthioadenosine/S-adenosylhomocysteine nucleosidase of Aliivibrio salmonicida (strain LFI1238) (Vibrio salmonicida (strain LFI1238)).